Consider the following 325-residue polypeptide: MTFIGVDHGTTAMRFALIEDEKVLTFELGRAEAAAMSEKEILAAIEREFGIRIGDIDLVALTYSMGDGFSAIKDVRKLEGRGLQSIEGAGKKTGGGTRVFDAVRNSEIPAIAIPGLHSGSRVDPRMKVFSHLTSPEKLGIAYHILCLGYEDFVVSDISSNTVTLAVVAGKVIGAIDACIFAPGVHHGPLDLQAIRNVDDRLQTANQAFIEAGTLKMTPYKDREELLKAAGKGEKPALLALDTIALFAAMEIASMQLLMKDYGTTGTVFLAGSVGEVEYVQKKICTHLDQECLSLGKWHAAIGCAEIARDVSAGKKQILGVNVDYP.

The protein belongs to the UPF0285 family.

The chain is UPF0285 protein MA_3856 from Methanosarcina acetivorans (strain ATCC 35395 / DSM 2834 / JCM 12185 / C2A).